A 388-amino-acid chain; its full sequence is Formate-dependent phosphoribosylglycinamide formyltransferase (388 aa).

N(1)-(5-phospho-beta-D-ribosyl)glycinamide-binding positions include E20–L21 and E80. ATP-binding positions include R112, K153, S158–Q163, E193–I196, and E201. The ATP-grasp domain occupies R117–L306. Mg(2+)-binding residues include E265 and E277. Residues D284, K352, and R359 to R360 contribute to the N(1)-(5-phospho-beta-D-ribosyl)glycinamide site.

This sequence belongs to the PurK/PurT family. Homodimer.

The enzyme catalyses N(1)-(5-phospho-beta-D-ribosyl)glycinamide + formate + ATP = N(2)-formyl-N(1)-(5-phospho-beta-D-ribosyl)glycinamide + ADP + phosphate + H(+). Its pathway is purine metabolism; IMP biosynthesis via de novo pathway; N(2)-formyl-N(1)-(5-phospho-D-ribosyl)glycinamide from N(1)-(5-phospho-D-ribosyl)glycinamide (formate route): step 1/1. Its function is as follows. Involved in the de novo purine biosynthesis. Catalyzes the transfer of formate to 5-phospho-ribosyl-glycinamide (GAR), producing 5-phospho-ribosyl-N-formylglycinamide (FGAR). Formate is provided by PurU via hydrolysis of 10-formyl-tetrahydrofolate. The sequence is that of Formate-dependent phosphoribosylglycinamide formyltransferase from Methanococcus maripaludis (strain C7 / ATCC BAA-1331).